The sequence spans 398 residues: MAVSGARPRMTWACDPVWTRGRLVPEQEGTRSAFRRDCDRIIHSTAFRRLKHKTQVFVFHEGDHYRTRLTHTLEVAQIARSIARALGLDEDLAEALALAHDLGHPPFAHAGERALDACMADYGGFDHNAQSLRVVTRLERRYAGFDGLNLTWETLEGIAKHNGPLTDRSGKPLGAAGDVLPHAIVAHSAVQDLELWTHAGPEAQVAAISDDIAYDVHDLDDGLRAGLFHLDELEALPLVGAVLAEVRASWPSLETGRVIHEVMRRLITRFVEDVVRETETRARAAKVRSSFDVRMAGAPLVAFSAGMRTAEAAVKGFLFPHMYRHARVNRIMDEAQGVVRDLFALFMARPQEMPADWQLEGAPPERMARRVADYIAGMTDRYALDQHARFFDTTPELR.

The region spanning 68 to 215 (RLTHTLEVAQ…AAISDDIAYD (148 aa)) is the HD domain.

This sequence belongs to the dGTPase family. Type 2 subfamily.

The polypeptide is Deoxyguanosinetriphosphate triphosphohydrolase-like protein (Azorhizobium caulinodans (strain ATCC 43989 / DSM 5975 / JCM 20966 / LMG 6465 / NBRC 14845 / NCIMB 13405 / ORS 571)).